We begin with the raw amino-acid sequence, 503 residues long: ESX-5 secretion system protein EccD5 (503 aa).

11 consecutive transmembrane segments (helical) span residues 137–157, 169–189, 200–220, 224–244, 250–270, 272–292, 359–379, 382–402, 413–433, 439–459, and 480–500; these read IVAV…ATGV, LTTI…MLLL, VADI…AAAP, VGSP…ALAL, RLGI…AALA, MVAA…CVVA, FLSG…TSLC, HTGQ…FLLL, SITL…RYAL, LAVS…MAAA, and YLCL…YAAI.

It belongs to the EccD/Snm4 family. In terms of assembly, part of the ESX-5 / type VII secretion system (T7SS), which is composed of cytosolic and membrane components. The ESX-5 membrane complex is composed of EccB5, EccC5, EccD5 and EccE5.

It localises to the cell inner membrane. In terms of biological role, part of the ESX-5 specialized secretion system, which is responsible for the secretion of EsxN and a number of PE_PGRS and PPE proteins, including PPE41. This Mycobacterium tuberculosis (strain CDC 1551 / Oshkosh) protein is ESX-5 secretion system protein EccD5.